Consider the following 275-residue polypeptide: Tryptophan synthase alpha chain (275 aa).

Residues Glu51 and Glu62 each act as proton acceptor in the active site.

It belongs to the TrpA family. In terms of assembly, tetramer of two alpha and two beta chains.

It catalyses the reaction (1S,2R)-1-C-(indol-3-yl)glycerol 3-phosphate + L-serine = D-glyceraldehyde 3-phosphate + L-tryptophan + H2O. The protein operates within amino-acid biosynthesis; L-tryptophan biosynthesis; L-tryptophan from chorismate: step 5/5. Its function is as follows. The alpha subunit is responsible for the aldol cleavage of indoleglycerol phosphate to indole and glyceraldehyde 3-phosphate. This Caulobacter sp. (strain K31) protein is Tryptophan synthase alpha chain.